Consider the following 117-residue polypeptide: Ig heavy chain V-A2 region K-25 (117 aa).

Position 1 is a pyrrolidone carboxylic acid (Gln1). Residues 1–106 (QSVKESEGGL…GLSYLKSSVD (106 aa)) form the Ig-like domain. Cys21 and Cys91 are disulfide-bonded.

This Oryctolagus cuniculus (Rabbit) protein is Ig heavy chain V-A2 region K-25.